The following is a 1270-amino-acid chain: DNA-directed RNA polymerase subunit beta (1270 aa).

Belongs to the RNA polymerase beta chain family. In terms of assembly, the RNAP catalytic core consists of 2 alpha, 1 beta, 1 beta' and 1 omega subunit. When a sigma factor is associated with the core the holoenzyme is formed, which can initiate transcription.

The enzyme catalyses RNA(n) + a ribonucleoside 5'-triphosphate = RNA(n+1) + diphosphate. Functionally, DNA-dependent RNA polymerase catalyzes the transcription of DNA into RNA using the four ribonucleoside triphosphates as substrates. The sequence is that of DNA-directed RNA polymerase subunit beta from Christiangramia forsetii (strain DSM 17595 / CGMCC 1.15422 / KT0803) (Gramella forsetii).